Consider the following 156-residue polypeptide: ATP synthase subunit b (156 aa).

Residues 7-27 (LIGQAIWFALFVFFCMKFVWP) traverse the membrane as a helical segment.

It belongs to the ATPase B chain family. As to quaternary structure, F-type ATPases have 2 components, F(1) - the catalytic core - and F(0) - the membrane proton channel. F(1) has five subunits: alpha(3), beta(3), gamma(1), delta(1), epsilon(1). F(0) has three main subunits: a(1), b(2) and c(10-14). The alpha and beta chains form an alternating ring which encloses part of the gamma chain. F(1) is attached to F(0) by a central stalk formed by the gamma and epsilon chains, while a peripheral stalk is formed by the delta and b chains.

It localises to the cell inner membrane. In terms of biological role, f(1)F(0) ATP synthase produces ATP from ADP in the presence of a proton or sodium gradient. F-type ATPases consist of two structural domains, F(1) containing the extramembraneous catalytic core and F(0) containing the membrane proton channel, linked together by a central stalk and a peripheral stalk. During catalysis, ATP synthesis in the catalytic domain of F(1) is coupled via a rotary mechanism of the central stalk subunits to proton translocation. Component of the F(0) channel, it forms part of the peripheral stalk, linking F(1) to F(0). The sequence is that of ATP synthase subunit b from Alcanivorax borkumensis (strain ATCC 700651 / DSM 11573 / NCIMB 13689 / SK2).